Reading from the N-terminus, the 217-residue chain is Probable transaldolase (217 aa).

K83 (schiff-base intermediate with substrate) is an active-site residue.

The protein belongs to the transaldolase family. Type 3B subfamily.

The protein resides in the cytoplasm. The enzyme catalyses D-sedoheptulose 7-phosphate + D-glyceraldehyde 3-phosphate = D-erythrose 4-phosphate + beta-D-fructose 6-phosphate. It functions in the pathway carbohydrate degradation; pentose phosphate pathway; D-glyceraldehyde 3-phosphate and beta-D-fructose 6-phosphate from D-ribose 5-phosphate and D-xylulose 5-phosphate (non-oxidative stage): step 2/3. Transaldolase is important for the balance of metabolites in the pentose-phosphate pathway. This is Probable transaldolase (tal) from Aquifex aeolicus (strain VF5).